Reading from the N-terminus, the 1253-residue chain is Methionine synthase (1253 aa).

One can recognise a Hcy-binding domain in the interval 6-326 (QDEIEAILRK…DHIREIAEAV (321 aa)). Zn(2+)-binding residues include Cys-248, Cys-311, and Cys-312. One can recognise a Pterin-binding domain in the interval 359–620 (FVNIGERCNV…IHKDLLQLCE (262 aa)). (6S)-5,6,7,8-tetrahydrofolate is bound by residues 370-372 (GSR), Asp-437, Asn-458, Asp-525, Asn-567, Arg-573, and Arg-579. Residues 650–747 (QTDEWRNGSI…FMEKEREEAR (98 aa)) form the B12-binding N-terminal domain. Methylcob(III)alamin is bound by residues Glu-697, 770–774 (GDVHD), His-773, Ser-818, Thr-822, and Ala-874. The B12-binding domain maps to 760 to 895 (QGTIVLATVK…DENLRDDYFE (136 aa)). Positions 911 to 1253 (SLKERKYVPL…LGPILGYDTD (343 aa)) constitute an AdoMet activation domain. Residues Asp-962, Arg-1160, and 1215–1216 (YF) contribute to the S-adenosyl-L-methionine site. Thr-1252 is modified (phosphothreonine).

It belongs to the vitamin-B12 dependent methionine synthase family. Monomer. Dimer. Forms a multiprotein complex with MMACHC, MMADHC and MTRR. The cofactor is methylcob(III)alamin. Zn(2+) serves as cofactor.

It localises to the cytoplasm. It catalyses the reaction (6S)-5-methyl-5,6,7,8-tetrahydrofolate + L-homocysteine = (6S)-5,6,7,8-tetrahydrofolate + L-methionine. The protein operates within amino-acid biosynthesis; L-methionine biosynthesis via de novo pathway; L-methionine from L-homocysteine (MetH route): step 1/1. Functionally, catalyzes the transfer of a methyl group from methylcob(III)alamin (MeCbl) to homocysteine, yielding enzyme-bound cob(I)alamin and methionine in the cytosol. MeCbl is an active form of cobalamin (vitamin B12) used as a cofactor for methionine biosynthesis. Cob(I)alamin form is regenerated to MeCbl by a transfer of a methyl group from 5-methyltetrahydrofolate. The processing of cobalamin in the cytosol occurs in a multiprotein complex composed of at least MMACHC, MMADHC, MTRR (methionine synthase reductase) and MTR which may contribute to shuttle safely and efficiently cobalamin towards MTR in order to produce methionine. This is Methionine synthase from Mus musculus (Mouse).